The following is a 150-amino-acid chain: Deoxyuridine 5'-triphosphate nucleotidohydrolase (150 aa).

Substrate is bound by residues 69-71 (RSG), Asn82, and 86-88 (TID).

The protein belongs to the dUTPase family. It depends on Mg(2+) as a cofactor.

It carries out the reaction dUTP + H2O = dUMP + diphosphate + H(+). Its pathway is pyrimidine metabolism; dUMP biosynthesis; dUMP from dCTP (dUTP route): step 2/2. Its function is as follows. This enzyme is involved in nucleotide metabolism: it produces dUMP, the immediate precursor of thymidine nucleotides and it decreases the intracellular concentration of dUTP so that uracil cannot be incorporated into DNA. This Syntrophus aciditrophicus (strain SB) protein is Deoxyuridine 5'-triphosphate nucleotidohydrolase.